The chain runs to 170 residues: Ergosterol biosynthetic protein 28 (170 aa).

Transmembrane regions (helical) follow at residues 7 to 27 (FLPEAKGVLPYYMIILSIISI), 116 to 136 (TLAYWTYIVAFSHFASELFVF), and 141 to 161 (FGLPQYFPFALASTSLIWMPL).

It belongs to the ERG28 family. Heterotetramer of ERG25, ERG26, ERG27 and ERG28. ERG28 acts as a scaffold to tether ERG27 and other 4,4-demethylation-related enzymes, forming a demethylation enzyme complex, in the endoplasmic reticulum.

It localises to the endoplasmic reticulum membrane. It participates in steroid metabolism; ergosterol biosynthesis. Its function is as follows. Sterol 24-C-methyltransferase; part of the third module of ergosterol biosynthesis pathway that includes the late steps of the pathway. ERG28 has a role as a scaffold to help anchor the catalytic components of the C-4 demethylation complex ERG25, ERG26 and ERG27 to the endoplasmic reticulum. The third module or late pathway involves the ergosterol synthesis itself through consecutive reactions that mainly occur in the endoplasmic reticulum (ER) membrane. Firstly, the squalene synthase ERG9 catalyzes the condensation of 2 farnesyl pyrophosphate moieties to form squalene, which is the precursor of all steroids. Squalene synthase is crucial for balancing the incorporation of farnesyl diphosphate (FPP) into sterol and nonsterol isoprene synthesis. Secondly, squalene is converted into lanosterol by the consecutive action of the squalene epoxidase ERG1 and the lanosterol synthase ERG7. Then, the delta(24)-sterol C-methyltransferase ERG6 methylates lanosterol at C-24 to produce eburicol. Eburicol is the substrate of the sterol 14-alpha demethylase encoded by CYP51A, CYP51B and CYP51C, to yield 4,4,24-trimethyl ergosta-8,14,24(28)-trienol. CYP51B encodes the enzyme primarily responsible for sterol 14-alpha-demethylation, and plays an essential role in ascospore formation. CYP51A encodes an additional sterol 14-alpha-demethylase, induced on ergosterol depletion and responsible for the intrinsic variation in azole sensitivity. The third CYP51 isoform, CYP51C, does not encode a sterol 14-alpha-demethylase, but is required for full virulence on host wheat ears. The C-14 reductase ERG24 then reduces the C14=C15 double bond which leads to 4,4-dimethylfecosterol. A sequence of further demethylations at C-4, involving the C-4 demethylation complex containing the C-4 methylsterol oxidases ERG25, the sterol-4-alpha-carboxylate 3-dehydrogenase ERG26 and the 3-keto-steroid reductase ERG27, leads to the production of fecosterol via 4-methylfecosterol. ERG28 has a role as a scaffold to help anchor ERG25, ERG26 and ERG27 to the endoplasmic reticulum. The C-8 sterol isomerase ERG2 then catalyzes the reaction which results in unsaturation at C-7 in the B ring of sterols and thus converts fecosterol to episterol. The sterol-C5-desaturases ERG3A and ERG3BB then catalyze the introduction of a C-5 double bond in the B ring to produce 5-dehydroepisterol. The C-22 sterol desaturases ERG5A and ERG5B further convert 5-dehydroepisterol into ergosta-5,7,22,24(28)-tetraen-3beta-ol by forming the C-22(23) double bond in the sterol side chain. Finally, ergosta-5,7,22,24(28)-tetraen-3beta-ol is substrate of the C-24(28) sterol reductase ERG4 to produce ergosterol. This Gibberella zeae (strain ATCC MYA-4620 / CBS 123657 / FGSC 9075 / NRRL 31084 / PH-1) (Wheat head blight fungus) protein is Ergosterol biosynthetic protein 28.